A 3088-amino-acid polypeptide reads, in one-letter code: Protein prune homolog 2 (3088 aa).

At methionine 1 the chain carries N-acetylmethionine. Residues 109 to 111 (GSS) carry the DHH motif motif. Disordered stretches follow at residues 433-468 (IRSSRSSKESSVFLSDDSPVGEGAGPHHTLLPGLDS), 490-628 (HFDL…EPAS), 673-759 (SSEQ…QGTN), 771-795 (SGRSPTAMPEPWGNPTDDGEPAAVA), 846-909 (SELL…PKTR), 952-1080 (SNLG…SSYD), 1192-1211 (SDEHTKDSAPSEHHTLNEKS), 1231-1371 (SFML…LVAS), 1413-1452 (RDVQTGMSADNLQPKDTHEKHLMSQRNSGETTETSDGMNF), 1472-1491 (LEPENVGGGPPHRVPRSLDF), 1515-1585 (VKGS…QESE), 1632-1698 (DSFS…EESI), 1741-1768 (LDSSEPAENENKSNPFCDNQQSSPDPWT), 1782-1813 (VEKEKRSSPETGTTGDVAWQISPKASFPKNED), 2089-2114 (ILTHCEHDSNSQASDSPDICHDSEAK), 2173-2215 (YQAD…PDMA), 2240-2260 (QEPTPEGDGSWISDSFSPESQ), 2492-2542 (SDLP…KNED), 2589-2667 (TQLA…SELG), 2687-2710 (ALEEASGPVSQSQKSKSRGRAGPD), 2814-2833 (QSEGSILSDDNLDSPDEIDI), and 2841-2875 (PDEADSFEYTGHDPTANKDSGQESESIPEYTAEEE). The segment covering 503–512 (SGQSQQSSHS) has biased composition (low complexity). Positions 562-582 (SLVEHDEEFVQRQDSPRDNSE) are enriched in basic and acidic residues. Composition is skewed to polar residues over residues 613-625 (MNSLVESSPSTEE) and 673-684 (SSEQESVFQSPE). Residues 685 to 699 (SWKEHKPSSIDRRAS) show a composition bias toward basic and acidic residues. Over residues 750–759 (LPNTSPQGTN) the composition is skewed to polar residues. Positions 846-857 (SELLDNSPSEIN) are enriched in polar residues. Over residues 865–876 (WGKKNNDSRDHI) the composition is skewed to basic and acidic residues. Residues 881-894 (NPSSDLDHTWTNSK) are compositionally biased toward polar residues. Over residues 895-909 (PPKEDQNGLVDPKTR) the composition is skewed to basic and acidic residues. The span at 964 to 977 (DTNYSTSDSYTSPT) shows a compositional bias: low complexity. The span at 980 to 1000 (GDEKETEHKPFAKEEGFESKD) shows a compositional bias: basic and acidic residues. Polar residues-rich tracts occupy residues 1001–1027 (GNSTAEETDIPPQSLQQSSRNRISSGP) and 1037–1048 (HTDNSSEINTTH). 5 stretches are compositionally biased toward basic and acidic residues: residues 1049-1062 (NLDENELKTEHTDG), 1192-1208 (SDEHTKDSAPSEHHTLN), 1282-1293 (HLDKQDTERETL), 1314-1339 (DPWKGHGDGQSESEKEAQGATDRGHL), and 1425-1434 (QPKDTHEKHL). A compositionally biased stretch (polar residues) spans 1436 to 1450 (SQRNSGETTETSDGM). Over residues 1537–1585 (SSEYTHSSASSPELNDSSVALSSWGQQPSSGYQEENQGNWSEQNHQESE) the composition is skewed to polar residues. Positions 1687-1698 (SDDDSVGGEESI) are enriched in acidic residues. Residues 1752-1768 (KSNPFCDNQQSSPDPWT) are compositionally biased toward polar residues. Composition is skewed to basic and acidic residues over residues 2516–2542 (EKTIPTKEPEQIKSEYKEERCTEKNED) and 2604–2622 (NERKGLSAEKMSSKSDTRS). The segment covering 2623–2632 (SFESPAQDQS) has biased composition (polar residues). The segment covering 2823 to 2833 (DNLDSPDEIDI) has biased composition (acidic residues). Positions 2895–3056 (DMKVIEPYRR…SIIKLDEELR (162 aa)) constitute a CRAL-TRIO domain.

The protein belongs to the PPase class C family. Prune subfamily. As to expression, a high level of expression seen in the nervous system (brain, cerebellum and spinal cord) as well as adrenal gland. Expressed at high levels in noneuroblastoma, rhabdomyosarcoma, melanoma and some osteosarcoma cell lines, whereas at only low levels in cancer cell lines of liver, breast, thyroid and colon. Expression is significantly higher in favorable tumors than aggressive ones.

Its subcellular location is the cytoplasm. In terms of biological role, may play an important role in regulating differentiation, survival and aggressiveness of the tumor cells. The protein is Protein prune homolog 2 (PRUNE2) of Homo sapiens (Human).